Reading from the N-terminus, the 121-residue chain is Fluoride-specific ion channel FluC 2 (121 aa).

A run of 4 helical transmembrane segments spans residues 3–23 (YLFV…LSTL), 27–47 (SGLP…MGYL), 64–84 (GVTT…FELV), and 92–112 (IALL…FCWF). 2 residues coordinate Na(+): G71 and T74.

The protein belongs to the fluoride channel Fluc/FEX (TC 1.A.43) family.

It localises to the cell membrane. The catalysed reaction is fluoride(in) = fluoride(out). Its activity is regulated as follows. Na(+) is not transported, but it plays an essential structural role and its presence is essential for fluoride channel function. In terms of biological role, fluoride-specific ion channel. Important for reducing fluoride concentration in the cell, thus reducing its toxicity. The protein is Fluoride-specific ion channel FluC 2 of Staphylococcus haemolyticus (strain JCSC1435).